Here is a 366-residue protein sequence, read N- to C-terminus: Sulfite reductase, dissimilatory-type subunit beta (366 aa).

C140, C177, C178, C182, C220, C241, C244, and C247 together coordinate [4Fe-4S] cluster. C182 lines the siroheme pocket. The 4Fe-4S ferredoxin-type domain occupies 232–262; that stretch reads KTIKVDVEKCMYCGNCYTMCPGMPLFDPEND.

In terms of assembly, heterotetramer of two alpha and two beta subunits. [4Fe-4S] cluster is required as a cofactor. The cofactor is siroheme.

It localises to the membrane. The catalysed reaction is [DsrC protein]-trisulfide + NAD(+) + 3 H2O = [DsrC protein]-dithiol + sulfite + NADH + 3 H(+). In terms of biological role, catalyzes the reduction of sulfite to sulfide. This is the terminal oxidation reaction in sulfate respiration. The sequence is that of Sulfite reductase, dissimilatory-type subunit beta (dsrB) from Archaeoglobus fulgidus (strain ATCC 49558 / DSM 4304 / JCM 9628 / NBRC 100126 / VC-16).